A 901-amino-acid chain; its full sequence is HTH-type transcriptional regulator MalT (901 aa).

39–46 (SPAGYGKT) contributes to the ATP binding site. Residues 829–894 (ELIRTSPLTQ…AAVQHAQKLL (66 aa)) form the HTH luxR-type domain. The segment at residues 853–872 (NEQIAGELEVAATTIKTHIR) is a DNA-binding region (H-T-H motif).

This sequence belongs to the MalT family. In terms of assembly, monomer in solution. Oligomerizes to an active state in the presence of the positive effectors ATP and maltotriose.

Its activity is regulated as follows. Activated by ATP and maltotriose, which are both required for DNA binding. Its function is as follows. Positively regulates the transcription of the maltose regulon whose gene products are responsible for uptake and catabolism of malto-oligosaccharides. Specifically binds to the promoter region of its target genes, recognizing a short DNA motif called the MalT box. The chain is HTH-type transcriptional regulator MalT from Shigella boydii serotype 4 (strain Sb227).